A 99-amino-acid polypeptide reads, in one-letter code: MKFFVITLIVLLGLLQYRLWSGDNSLPEYFVLQKQIAAQQDGNAKLNERNQVLKEEIIDLKSGTEAIEERARNELGMVKEGETFYRVVGGDRAVSSPSQ.

The Cytoplasmic segment spans residues 1 to 3; that stretch reads MKF. Residues 4-21 form a helical membrane-spanning segment; that stretch reads FVITLIVLLGLLQYRLWS. Topologically, residues 22–99 are periplasmic; it reads GDNSLPEYFV…GDRAVSSPSQ (78 aa). A coiled-coil region spans residues 31-73; that stretch reads VLQKQIAAQQDGNAKLNERNQVLKEEIIDLKSGTEAIEERARN.

The protein belongs to the FtsB family. As to quaternary structure, part of a complex composed of FtsB, FtsL and FtsQ.

It localises to the cell inner membrane. Functionally, essential cell division protein. May link together the upstream cell division proteins, which are predominantly cytoplasmic, with the downstream cell division proteins, which are predominantly periplasmic. The chain is Cell division protein FtsB from Shewanella oneidensis (strain ATCC 700550 / JCM 31522 / CIP 106686 / LMG 19005 / NCIMB 14063 / MR-1).